Here is a 179-residue protein sequence, read N- to C-terminus: Large ribosomal subunit protein uL6 (179 aa).

Belongs to the universal ribosomal protein uL6 family. Part of the 50S ribosomal subunit.

In terms of biological role, this protein binds to the 23S rRNA, and is important in its secondary structure. It is located near the subunit interface in the base of the L7/L12 stalk, and near the tRNA binding site of the peptidyltransferase center. The sequence is that of Large ribosomal subunit protein uL6 from Mycobacteroides abscessus (strain ATCC 19977 / DSM 44196 / CCUG 20993 / CIP 104536 / JCM 13569 / NCTC 13031 / TMC 1543 / L948) (Mycobacterium abscessus).